Reading from the N-terminus, the 694-residue chain is Elongation factor G (694 aa).

Residues 8–287 (EDYRNFGIMA…AVVEFLPAPT (280 aa)) enclose the tr-type G domain. Residues 17-24 (AHIDAGKT), 86-90 (DTPGH), and 140-143 (NKMD) contribute to the GTP site.

The protein belongs to the TRAFAC class translation factor GTPase superfamily. Classic translation factor GTPase family. EF-G/EF-2 subfamily.

The protein resides in the cytoplasm. Functionally, catalyzes the GTP-dependent ribosomal translocation step during translation elongation. During this step, the ribosome changes from the pre-translocational (PRE) to the post-translocational (POST) state as the newly formed A-site-bound peptidyl-tRNA and P-site-bound deacylated tRNA move to the P and E sites, respectively. Catalyzes the coordinated movement of the two tRNA molecules, the mRNA and conformational changes in the ribosome. This is Elongation factor G from Brucella melitensis biotype 1 (strain ATCC 23456 / CCUG 17765 / NCTC 10094 / 16M).